We begin with the raw amino-acid sequence, 416 residues long: 5-methylthioadenosine/S-adenosylhomocysteine deaminase 2 (416 aa).

Zn(2+) contacts are provided by histidine 58 and histidine 60. Substrate contacts are provided by glutamate 86 and histidine 178. A Zn(2+)-binding site is contributed by histidine 205. Substrate contacts are provided by glutamate 208 and aspartate 293. Position 293 (aspartate 293) interacts with Zn(2+).

Belongs to the metallo-dependent hydrolases superfamily. MTA/SAH deaminase family. Zn(2+) serves as cofactor.

It catalyses the reaction S-adenosyl-L-homocysteine + H2O + H(+) = S-inosyl-L-homocysteine + NH4(+). The enzyme catalyses S-methyl-5'-thioadenosine + H2O + H(+) = S-methyl-5'-thioinosine + NH4(+). Its function is as follows. Catalyzes the deamination of 5-methylthioadenosine and S-adenosyl-L-homocysteine into 5-methylthioinosine and S-inosyl-L-homocysteine, respectively. Is also able to deaminate adenosine. The chain is 5-methylthioadenosine/S-adenosylhomocysteine deaminase 2 from Archaeoglobus fulgidus (strain ATCC 49558 / DSM 4304 / JCM 9628 / NBRC 100126 / VC-16).